The sequence spans 451 residues: Prenyltransferase asqH1 (451 aa).

Residues alanine 14–proline 37 are disordered. Glutamate 120 provides a ligand contact to L-tryptophan. Substrate contacts are provided by arginine 137, arginine 274, lysine 276, tyrosine 278, and tyrosine 373.

It belongs to the tryptophan dimethylallyltransferase family.

The enzyme catalyses quinolinone B + dimethylallyl diphosphate = peniprequinolone + diphosphate. It functions in the pathway secondary metabolite biosynthesis. The protein operates within alkaloid biosynthesis. Its pathway is mycotoxin biosynthesis. Its function is as follows. Prenyltransferase; part of the gene cluster that mediates the biosynthesis of the aspoquinolone mycotoxins. Within the pathway, the prenyltransferase asqH1 catalyzes the canonical Friedel-Crafts alkylation of quinolinone B with dimethylallyl cation to yield dimethylallyl quinolone. The first step of the pathway is catalyzed by the nonribosomal peptide synthetase asqK that condenses anthranilic acid and O-methyl-L-tyrosine to produce 4'-methoxycyclopeptin. 4'-methoxycyclopeptin is then converted to 4'-methoxydehydrocyclopeptin by the ketoglutarate-dependent dioxygenase asqJ. AsqJ also converts its first product 4'-methoxydehydrocyclopeptin to 4'-methoxycyclopenin. The following conversion of 4'-methoxycyclopenin into 4'-methoxyviridicatin is catalyzed by the cyclopenase asqI. 4'-methoxyviridicatin is the precursor of quinolone natural products, and is further converted to quinolinone B. The prenyltransferase asqH1 then catalyzes the canonical Friedel-Crafts alkylation of quinolinone B with dimethylallyl cation to yield dimethylallyl quinolone, which is subjected to FAD-dependent dehydrogenation by the FAD-linked oxidoreductase asqF to yield conjugated aryl diene. The delta(3') double bond then serves as the site of the second alkylation with DMAPP catalyzed by the prenyltransferase asqH2 to yield a carbenium ion intermediate, which can be attacked by H(2)O to yield a styrenyl quinolone containing a C3'-hydroxyprenyl chain. The FAD-dependent monooxygenase asqG performs epoxidation of the terminal C7'-C8' olefin. Finally, after dehydratation of the epoxide at C3 by asqC, the quinolone epoxide rearrangement protein asqO catalyzes an enzymatic 3-exo-tet cyclization to yield the cyclopropyl-THF ring system in aspoquinolone. The protein is Prenyltransferase asqH1 of Emericella nidulans (strain FGSC A4 / ATCC 38163 / CBS 112.46 / NRRL 194 / M139) (Aspergillus nidulans).